The chain runs to 325 residues: NADH-quinone oxidoreductase subunit H (325 aa).

Transmembrane regions (helical) follow at residues I11–F31, V81–V101, I114–G134, L154–F174, V186–V206, F237–F257, L265–I285, and I304–A324.

It belongs to the complex I subunit 1 family. In terms of assembly, NDH-1 is composed of 13 different subunits. Subunits NuoA, H, J, K, L, M, N constitute the membrane sector of the complex.

The protein localises to the cell inner membrane. The enzyme catalyses a quinone + NADH + 5 H(+)(in) = a quinol + NAD(+) + 4 H(+)(out). Its function is as follows. NDH-1 shuttles electrons from NADH, via FMN and iron-sulfur (Fe-S) centers, to quinones in the respiratory chain. The immediate electron acceptor for the enzyme in this species is believed to be ubiquinone. Couples the redox reaction to proton translocation (for every two electrons transferred, four hydrogen ions are translocated across the cytoplasmic membrane), and thus conserves the redox energy in a proton gradient. This subunit may bind ubiquinone. The sequence is that of NADH-quinone oxidoreductase subunit H from Escherichia coli O45:K1 (strain S88 / ExPEC).